The chain runs to 390 residues: Tryptophan synthase beta chain 2 (390 aa).

An N6-(pyridoxal phosphate)lysine modification is found at Lys-83.

The protein belongs to the TrpB family. As to quaternary structure, tetramer of two alpha and two beta chains. Requires pyridoxal 5'-phosphate as cofactor.

The enzyme catalyses (1S,2R)-1-C-(indol-3-yl)glycerol 3-phosphate + L-serine = D-glyceraldehyde 3-phosphate + L-tryptophan + H2O. It functions in the pathway amino-acid biosynthesis; L-tryptophan biosynthesis; L-tryptophan from chorismate: step 5/5. Functionally, the beta subunit is responsible for the synthesis of L-tryptophan from indole and L-serine. This Methanothermobacter marburgensis (strain ATCC BAA-927 / DSM 2133 / JCM 14651 / NBRC 100331 / OCM 82 / Marburg) (Methanobacterium thermoautotrophicum) protein is Tryptophan synthase beta chain 2 (trpB2).